Consider the following 450-residue polypeptide: Zinc metalloproteinase nas-13 (450 aa).

Residues 1 to 31 (MPSPTSSSASVFSSHLFFVFCIFSQIAQSYA) form the signal peptide. Asn68 carries an N-linked (GlcNAc...) asparagine glycan. The Peptidase M12A domain maps to 110 to 303 (NAVRQTYLKW…YKINMLYNCP (194 aa)). 2 disulfide bridges follow: Cys152-Cys302 and Cys174-Cys193. Residue His201 coordinates Zn(2+). Glu202 is an active-site residue. Zn(2+) is bound by residues His205 and His211. N-linked (GlcNAc...) asparagine glycosylation is present at Asn225. Positions 349-351 (RGD) match the Cell attachment site motif. 6 cysteine pairs are disulfide-bonded: Cys368–Cys404, Cys375–Cys397, Cys384–Cys401, Cys414–Cys450, Cys421–Cys443, and Cys430–Cys447. ShKT domains are found at residues 368-404 (CEDR…CGKC) and 414-450 (CEDA…CNFC). A glycan (N-linked (GlcNAc...) asparagine) is linked at Asn431.

Zn(2+) serves as cofactor.

Its subcellular location is the secreted. In terms of biological role, metalloprotease. The chain is Zinc metalloproteinase nas-13 (nas-13) from Caenorhabditis elegans.